A 96-amino-acid chain; its full sequence is Co-chaperonin GroES (96 aa).

The protein belongs to the GroES chaperonin family. Heptamer of 7 subunits arranged in a ring. Interacts with the chaperonin GroEL.

The protein localises to the cytoplasm. In terms of biological role, together with the chaperonin GroEL, plays an essential role in assisting protein folding. The GroEL-GroES system forms a nano-cage that allows encapsulation of the non-native substrate proteins and provides a physical environment optimized to promote and accelerate protein folding. GroES binds to the apical surface of the GroEL ring, thereby capping the opening of the GroEL channel. The chain is Co-chaperonin GroES from Vibrio campbellii (strain ATCC BAA-1116).